Consider the following 309-residue polypeptide: Virulence regulon transcriptional activator VirB (309 aa).

Residues 152-171 constitute a DNA-binding region (H-T-H motif); that stretch reads KDIAKKENLSRAKVTRAFQA.

Belongs to the ParB family.

Its function is as follows. Transcription activator for the invasion antigens IpaB, IpaC and IpaD. VirB is itself regulated by VirF. The polypeptide is Virulence regulon transcriptional activator VirB (virB) (Shigella flexneri).